Consider the following 185-residue polypeptide: Cbp/p300-interacting transactivator 4 (185 aa).

2 disordered regions span residues 15 to 64 and 95 to 130; these read PRPP…VAYG and YPGR…AHAL. A compositionally biased stretch (pro residues) spans 103–125; it reads PGAPGGPSGPQPAPGAPAPPLQP.

The protein belongs to the CITED family. In terms of assembly, interacts via its C-terminal region with the CH1 domain of CREBBP and EP300. Interacts with all TFAP2/AP-2 isoforms.

It localises to the nucleus. It is found in the cytoplasm. Acts as a transcriptional coactivator for TFAP2/AP-2. Enhances estrogen-dependent transactivation mediated by estrogen receptors. May function as an inhibitor of transactivation by HIF1A by disrupting HIF1A interaction with CREBBP. May be involved in regulation of gene expression during development and differentiation of blood cells, endothelial cells and mammary epithelial cells. The polypeptide is Cbp/p300-interacting transactivator 4 (CITED4) (Bos taurus (Bovine)).